A 332-amino-acid chain; its full sequence is L-lactate dehydrogenase A chain (332 aa).

Residues 29-57 (GMVG…MEDK) and Arg99 each bind NAD(+). Substrate contacts are provided by Arg106, Asn138, and Arg169. Residue Asn138 participates in NAD(+) binding. His193 acts as the Proton acceptor in catalysis. A substrate-binding site is contributed by Thr248.

Belongs to the LDH/MDH superfamily. LDH family. Homotetramer.

It is found in the cytoplasm. The enzyme catalyses (S)-lactate + NAD(+) = pyruvate + NADH + H(+). The protein operates within fermentation; pyruvate fermentation to lactate; (S)-lactate from pyruvate: step 1/1. Functionally, interconverts simultaneously and stereospecifically pyruvate and lactate with concomitant interconversion of NADH and NAD(+). The protein is L-lactate dehydrogenase A chain (ldha) of Eleginops maclovinus (Patagonian blennie).